Here is a 156-residue protein sequence, read N- to C-terminus: Small ribosomal subunit protein uS7 (156 aa).

In terms of assembly, part of the 30S ribosomal subunit. Contacts proteins S9 and S11. Binds to the C-terminus of IF3 and to the C-terminus of Era.

One of the primary rRNA binding proteins, it binds directly to 3'-end of the 16S rRNA where it nucleates assembly of the head domain of the 30S subunit. Is located at the subunit interface close to the decoding center. Binds mRNA and the E site tRNA blocking its exit path in the ribosome. This blockage implies that this section of the ribosome must be able to move to release the deacetylated tRNA. The protein is Small ribosomal subunit protein uS7 (rpsG) of Thermus thermophilus (strain ATCC 27634 / DSM 579 / HB8).